A 619-amino-acid chain; its full sequence is tRNA uridine 5-carboxymethylaminomethyl modification enzyme MnmG (619 aa).

Residues 14-19, V126, and S181 each bind FAD; that span reads GAGHAG. 273 to 287 contacts NAD(+); that stretch reads GPRYCPSIEDKIMRF. FAD is bound at residue Q370.

Belongs to the MnmG family. In terms of assembly, homodimer. Heterotetramer of two MnmE and two MnmG subunits. It depends on FAD as a cofactor.

It localises to the cytoplasm. Functionally, NAD-binding protein involved in the addition of a carboxymethylaminomethyl (cmnm) group at the wobble position (U34) of certain tRNAs, forming tRNA-cmnm(5)s(2)U34. In Syntrophotalea carbinolica (strain DSM 2380 / NBRC 103641 / GraBd1) (Pelobacter carbinolicus), this protein is tRNA uridine 5-carboxymethylaminomethyl modification enzyme MnmG.